The sequence spans 369 residues: Glycine oxidase (369 aa).

FAD is bound by residues 14-15 (II), 34-35 (ES), 42-43 (AT), 47-49 (AGM), and valine 174. Substrate-binding residues include arginine 302 and arginine 329. Residue 327-333 (HFRNGIL) participates in FAD binding.

The protein belongs to the DAO family. ThiO subfamily. Homotetramer. Requires FAD as cofactor.

It carries out the reaction glycine + O2 + H2O = glyoxylate + H2O2 + NH4(+). It catalyses the reaction glyphosate + O2 + H2O = aminomethylphosphonate + glyoxylate + H2O2 + H(+). The enzyme catalyses N-ethylglycine + O2 + H2O = ethylamine + glyoxylate + H2O2. The catalysed reaction is sarcosine + O2 + H2O = methylamine + glyoxylate + H2O2. It carries out the reaction D-alanine + O2 + H2O = pyruvate + H2O2 + NH4(+). It functions in the pathway cofactor biosynthesis; thiamine diphosphate biosynthesis. Its function is as follows. Catalyzes the FAD-dependent oxidative deamination of glycine, leading to glyoxylate, ammonia and hydrogen peroxide. Is also able to act on various amines and D-amino acids to yield the corresponding alpha-keto acids, ammonia/amine, and hydrogen peroxide. Can also oxidize the herbicide glyphosate (N-phosphonomethylglycine), and thus may be involved in the degradation pathway that allows B.licheniformis J33-8 to grow with glyphosate as the sole source of carbon. Is essential for thiamine biosynthesis since the oxidation of glycine catalyzed by ThiO generates the glycine imine intermediate (dehydroglycine) required for the biosynthesis of the thiazole ring of thiamine pyrophosphate. In Bacillus licheniformis, this protein is Glycine oxidase.